The chain runs to 431 residues: MPVLTRSAELFEKAKKFIPGGVNSPVRAFKSVGGTPIYMAKGQGAYMTDVDGNTYLDYVGSWGPFILGSMHPRVTAAIEYTLRNIGTSFGTPIELEIEIAELLCKIVPSLEMVRMVNSGTEATMSAVRLARGYTGKDKIIKFEGCYHGHGDSFLIKAGSGVLTLGDPDSPGVTKGTANDTLNATYNDIESVKAIVNENKGQVAAIIIEPVAGNTGVIPAKKEFLVALRELCDAEGIVLIFDEVMCGFRVALGGAQELYGVTPDLTTMGKIIGGGLPVGAFGGKRHIMENIAPLGSVYQAGTLSGNPLALTAGLETLKILMEENPYPELERKAAFLEAGFKANMEKLGLNYTQNRVGSMACLFFTETPVVDYKSAITADTAKYGKYFHSMLDQGIYLAPSQFEAMFTSFAHTDEDLEKTVKANYNALVAATK.

Position 269 is an N6-(pyridoxal phosphate)lysine (lysine 269).

The protein belongs to the class-III pyridoxal-phosphate-dependent aminotransferase family. HemL subfamily. As to quaternary structure, homodimer. The cofactor is pyridoxal 5'-phosphate.

It localises to the cytoplasm. The catalysed reaction is (S)-4-amino-5-oxopentanoate = 5-aminolevulinate. It functions in the pathway porphyrin-containing compound metabolism; protoporphyrin-IX biosynthesis; 5-aminolevulinate from L-glutamyl-tRNA(Glu): step 2/2. The protein operates within porphyrin-containing compound metabolism; chlorophyll biosynthesis. In Chlorobaculum tepidum (strain ATCC 49652 / DSM 12025 / NBRC 103806 / TLS) (Chlorobium tepidum), this protein is Glutamate-1-semialdehyde 2,1-aminomutase.